The following is a 288-amino-acid chain: Diaminopimelate epimerase (288 aa).

Positions 14 and 67 each coordinate substrate. The Proton donor role is filled by Cys-76. Residues Gly-77 to Asn-78, Asn-166, Asn-199, and Glu-217 to Arg-218 each bind substrate. Cys-226 acts as the Proton acceptor in catalysis. Gly-227–Thr-228 contributes to the substrate binding site.

It belongs to the diaminopimelate epimerase family. As to quaternary structure, homodimer.

Its subcellular location is the cytoplasm. It carries out the reaction (2S,6S)-2,6-diaminopimelate = meso-2,6-diaminopimelate. It participates in amino-acid biosynthesis; L-lysine biosynthesis via DAP pathway; DL-2,6-diaminopimelate from LL-2,6-diaminopimelate: step 1/1. Catalyzes the stereoinversion of LL-2,6-diaminopimelate (L,L-DAP) to meso-diaminopimelate (meso-DAP), a precursor of L-lysine and an essential component of the bacterial peptidoglycan. In Bacillus cereus (strain 03BB102), this protein is Diaminopimelate epimerase.